Reading from the N-terminus, the 407-residue chain is Multifunctional CCA protein (407 aa).

Positions 8 and 11 each coordinate ATP. The CTP site is built by G8 and R11. 2 residues coordinate Mg(2+): D21 and D23. ATP contacts are provided by R91, R137, and R140. CTP is bound by residues R91, R137, and R140. The 102-residue stretch at 225–326 (CGDHVMRVLD…LRLLKDCDAL (102 aa)) folds into the HD domain.

It belongs to the tRNA nucleotidyltransferase/poly(A) polymerase family. Bacterial CCA-adding enzyme type 1 subfamily. In terms of assembly, monomer. Can also form homodimers and oligomers. Requires Mg(2+) as cofactor. Ni(2+) serves as cofactor.

The catalysed reaction is a tRNA precursor + 2 CTP + ATP = a tRNA with a 3' CCA end + 3 diphosphate. The enzyme catalyses a tRNA with a 3' CCA end + 2 CTP + ATP = a tRNA with a 3' CCACCA end + 3 diphosphate. Functionally, catalyzes the addition and repair of the essential 3'-terminal CCA sequence in tRNAs without using a nucleic acid template. Adds these three nucleotides in the order of C, C, and A to the tRNA nucleotide-73, using CTP and ATP as substrates and producing inorganic pyrophosphate. tRNA 3'-terminal CCA addition is required both for tRNA processing and repair. Also involved in tRNA surveillance by mediating tandem CCA addition to generate a CCACCA at the 3' terminus of unstable tRNAs. While stable tRNAs receive only 3'-terminal CCA, unstable tRNAs are marked with CCACCA and rapidly degraded. The polypeptide is Multifunctional CCA protein (Chromobacterium violaceum (strain ATCC 12472 / DSM 30191 / JCM 1249 / CCUG 213 / NBRC 12614 / NCIMB 9131 / NCTC 9757 / MK)).